A 138-amino-acid chain; its full sequence is Putative pre-16S rRNA nuclease (138 aa).

This sequence belongs to the YqgF nuclease family.

The protein localises to the cytoplasm. Functionally, could be a nuclease involved in processing of the 5'-end of pre-16S rRNA. The sequence is that of Putative pre-16S rRNA nuclease from Shigella dysenteriae serotype 1 (strain Sd197).